Reading from the N-terminus, the 204-residue chain is Nascent polypeptide-associated complex subunit alpha-like protein 3 (204 aa).

Basic and acidic residues predominate over residues M1–P23. Disordered regions lie at residues M1 to K68 and G141 to V165. Over residues E24–E43 the composition is skewed to acidic residues. Position 36 is a phosphoserine (S36). The span at G44 to E59 shows a compositional bias: basic and acidic residues. Residues S56–L121 form the NAC-A/B domain. Low complexity predominate over residues G141 to V152. A compositionally biased stretch (acidic residues) spans Q153–G164. A UBA domain is found at E159 to T204.

This sequence belongs to the NAC-alpha family.

May promote appropriate targeting of ribosome-nascent polypeptide complexes. This is Nascent polypeptide-associated complex subunit alpha-like protein 3 from Arabidopsis thaliana (Mouse-ear cress).